A 159-amino-acid chain; its full sequence is Phosphopantetheine adenylyltransferase (159 aa).

Position 10 (S10) interacts with substrate. ATP-binding positions include 10–11 and H18; that span reads SF. Residues K42, L77, and K91 each contribute to the substrate site. Residues 92 to 94, E102, and 126 to 132 contribute to the ATP site; these read GIR and NAHVSSS.

It belongs to the bacterial CoaD family. As to quaternary structure, homohexamer. Requires Mg(2+) as cofactor.

It localises to the cytoplasm. The catalysed reaction is (R)-4'-phosphopantetheine + ATP + H(+) = 3'-dephospho-CoA + diphosphate. It participates in cofactor biosynthesis; coenzyme A biosynthesis; CoA from (R)-pantothenate: step 4/5. Its function is as follows. Reversibly transfers an adenylyl group from ATP to 4'-phosphopantetheine, yielding dephospho-CoA (dPCoA) and pyrophosphate. The chain is Phosphopantetheine adenylyltransferase from Leifsonia xyli subsp. xyli (strain CTCB07).